The following is a 72-amino-acid chain: Putative transmembrane protein DDB_G0272126 (72 aa).

The next 2 membrane-spanning stretches (helical) occupy residues 6-26 (KIIK…NTII) and 38-58 (IILV…IFYG).

It is found in the membrane. This chain is Putative transmembrane protein DDB_G0272126, found in Dictyostelium discoideum (Social amoeba).